Reading from the N-terminus, the 174-residue chain is Interferon gamma (174 aa).

Positions 1–23 (MNSTRCILALLLCLTQAMSGCYG) are cleaved as a signal peptide. Pyrrolidone carboxylic acid is present on Gln-24. N-linked (GlcNAc...) asparagine glycosylation is found at Asn-39 and Asn-106.

The protein belongs to the type II (or gamma) interferon family. As to quaternary structure, homodimer. Interacts with IFNGR1 (via extracellular domain); this interaction promotes IFNGR1 dimerization. In terms of tissue distribution, released primarily from activated T lymphocytes.

The protein localises to the secreted. Functionally, type II interferon produced by immune cells such as T-cells and NK cells that plays crucial roles in antimicrobial, antiviral, and antitumor responses by activating effector immune cells and enhancing antigen presentation. Primarily signals through the JAK-STAT pathway after interaction with its receptor IFNGR1 to affect gene regulation. Upon IFNG binding, IFNGR1 intracellular domain opens out to allow association of downstream signaling components JAK2, JAK1 and STAT1, leading to STAT1 activation, nuclear translocation and transcription of IFNG-regulated genes. Many of the induced genes are transcription factors such as IRF1 that are able to further drive regulation of a next wave of transcription. Plays a role in class I antigen presentation pathway by inducing a replacement of catalytic proteasome subunits with immunoproteasome subunits. In turn, increases the quantity, quality, and repertoire of peptides for class I MHC loading. Increases the efficiency of peptide generation also by inducing the expression of activator PA28 that associates with the proteasome and alters its proteolytic cleavage preference. Up-regulates as well MHC II complexes on the cell surface by promoting expression of several key molecules such as cathepsins B/CTSB, H/CTSH, and L/CTSL. Participates in the regulation of hematopoietic stem cells during development and under homeostatic conditions by affecting their development, quiescence, and differentiation. The protein is Interferon gamma (IFNG) of Phodopus sungorus (Striped hairy-footed hamster).